A 178-amino-acid chain; its full sequence is uncharacterized protein (178 aa).

Residues 64-103 form a disordered region; sequence GVSDNTNKTTAKDNVSDKSSENEVAQPKQVTPPVDATGNT. The segment covering 73-84 has biased composition (basic and acidic residues); the sequence is TAKDNVSDKSSE.

This is an uncharacterized protein from Acidianus sp. F28 (AFV-2).